The chain runs to 525 residues: Anti-silencing protein 2 (525 aa).

Positions 467–525 (LPRVPTDSPQLPSKDKSQETAKKDDRPKLVANEPVTLDTSTPPVAQSLADSKHCSGLHK) are disordered. Basic and acidic residues predominate over residues 479 to 494 (SKDKSQETAKKDDRPK).

Derepression of silent mating type loci when overexpressed. The sequence is that of Anti-silencing protein 2 (ASF2) from Saccharomyces cerevisiae (strain ATCC 204508 / S288c) (Baker's yeast).